Here is a 781-residue protein sequence, read N- to C-terminus: Acyl-CoA dehydrogenase family member 11 (781 aa).

K177 bears the N6-acetyllysine mark. Y325 is subject to Phosphotyrosine. K392 is subject to N6-succinyllysine. FAD contacts are provided by residues 505–515, 513–515, 539–541, and S541; these read FCMTEPDVASS, ASS, and WSS. S515 contributes to the substrate binding site. 630–633 contributes to the substrate binding site; that stretch reads GPGR. FAD is bound by residues R658, Q728, and 728 to 732; that span reads QVCGG. A substrate-binding site is contributed by G756. FAD-binding positions include 757 to 759 and E759; that span reads PDE.

The protein belongs to the acyl-CoA dehydrogenase family. Homodimer. FAD is required as a cofactor.

The protein localises to the peroxisome. It is found in the mitochondrion membrane. It catalyses the reaction a 2,3-saturated acyl-CoA + oxidized [electron-transfer flavoprotein] + H(+) = a (2E)-enoyl-CoA + reduced [electron-transfer flavoprotein]. It carries out the reaction docosanoyl-CoA + oxidized [electron-transfer flavoprotein] + H(+) = (2E)-docosenoyl-CoA + reduced [electron-transfer flavoprotein]. The catalysed reaction is tetracosanoyl-CoA + oxidized [electron-transfer flavoprotein] + H(+) = (2E)-tetracosenoyl-CoA + reduced [electron-transfer flavoprotein]. The enzyme catalyses eicosanoyl-CoA + oxidized [electron-transfer flavoprotein] + H(+) = (2E)-eicosenoyl-CoA + reduced [electron-transfer flavoprotein]. It catalyses the reaction hexacosanoyl-CoA + oxidized [electron-transfer flavoprotein] + H(+) = (2E)-hexacosenoyl-CoA + reduced [electron-transfer flavoprotein]. It carries out the reaction tricosanoyl-CoA + oxidized [electron-transfer flavoprotein] + H(+) = (2E)-tricosenoyl-CoA + reduced [electron-transfer flavoprotein]. The protein operates within lipid metabolism; fatty acid beta-oxidation. Its function is as follows. Acyl-CoA dehydrogenase, that exhibits maximal activity towards saturated C22-CoA. Probably participates in beta-oxydation and energy production but could also play a role in the metabolism of specific fatty acids to control fatty acids composition of cellular lipids in brain. This Pongo abelii (Sumatran orangutan) protein is Acyl-CoA dehydrogenase family member 11 (ACAD11).